We begin with the raw amino-acid sequence, 468 residues long: Soluble pyridine nucleotide transhydrogenase (468 aa).

38 to 47 lines the FAD pocket; sequence ERHYNVGGGC.

It belongs to the class-I pyridine nucleotide-disulfide oxidoreductase family. Requires FAD as cofactor.

The protein localises to the cytoplasm. The catalysed reaction is NAD(+) + NADPH = NADH + NADP(+). Functionally, conversion of NADPH, generated by peripheral catabolic pathways, to NADH, which can enter the respiratory chain for energy generation. The protein is Soluble pyridine nucleotide transhydrogenase of Pectobacterium atrosepticum (strain SCRI 1043 / ATCC BAA-672) (Erwinia carotovora subsp. atroseptica).